A 77-amino-acid polypeptide reads, in one-letter code: NADH dehydrogenase [ubiquinone] 1 alpha subcomplex subunit 3 (77 aa).

The chain crosses the membrane as a helical span at residues 23 to 45; it reads IVGGSALALAGIVMATIGVANYY.

It belongs to the complex I NDUFA3 subunit family. Complex I is composed of 43 different subunits.

It localises to the mitochondrion inner membrane. The protein localises to the cytoplasm. The protein resides in the myofibril. It is found in the sarcomere. Its subcellular location is the z line. Accessory subunit of the mitochondrial membrane respiratory chain NADH dehydrogenase (Complex I), that is believed not to be involved in catalysis. Complex I functions in the transfer of electrons from NADH to the respiratory chain. The immediate electron acceptor for the enzyme is believed to be ubiquinone. Required for the maintenance of muscle integrity and for cell proliferation in the wing imaginal disc epithelium, possibly by interacting with the chaperone-assisted selective autophagy (CASA) pathway. This chain is NADH dehydrogenase [ubiquinone] 1 alpha subcomplex subunit 3, found in Drosophila melanogaster (Fruit fly).